We begin with the raw amino-acid sequence, 339 residues long: DNA-directed RNA polymerase subunit alpha (339 aa).

Residues 1–233 are alpha N-terminal domain (alpha-NTD); the sequence is MVREEIAVAT…DLFIPFLHAE (233 aa). The segment at 267–339 is alpha C-terminal domain (alpha-CTD); that stretch reads KKMALKSIFI…FGFDLPKNGK (73 aa).

Belongs to the RNA polymerase alpha chain family. As to quaternary structure, in plastids the minimal PEP RNA polymerase catalytic core is composed of four subunits: alpha, beta, beta', and beta''. When a (nuclear-encoded) sigma factor is associated with the core the holoenzyme is formed, which can initiate transcription.

The protein localises to the plastid. The protein resides in the chloroplast. It catalyses the reaction RNA(n) + a ribonucleoside 5'-triphosphate = RNA(n+1) + diphosphate. In terms of biological role, DNA-dependent RNA polymerase catalyzes the transcription of DNA into RNA using the four ribonucleoside triphosphates as substrates. The chain is DNA-directed RNA polymerase subunit alpha from Piper cenocladum (Ant piper).